A 615-amino-acid chain; its full sequence is Protein translocase subunit SecD (615 aa).

The next 6 helical transmembrane spans lie at 10-30 (YIML…NLYG), 452-472 (QGLE…IFFY), 477-497 (LIAT…MSLL), 504-524 (MPGI…NVLI), 546-568 (YAGA…IILY), and 585-605 (GVAT…NLLY).

This sequence belongs to the SecD/SecF family. SecD subfamily. Forms a complex with SecF. Part of the essential Sec protein translocation apparatus which comprises SecA, SecYEG and auxiliary proteins SecDF-YajC and YidC.

It is found in the cell inner membrane. Part of the Sec protein translocase complex. Interacts with the SecYEG preprotein conducting channel. SecDF uses the proton motive force (PMF) to complete protein translocation after the ATP-dependent function of SecA. The protein is Protein translocase subunit SecD of Salmonella choleraesuis (strain SC-B67).